Reading from the N-terminus, the 821-residue chain is DNA ligase (821 aa).

NAD(+)-binding positions include 50–54 (DAEYD), 99–100 (SL), and Glu-140. Lys-142 serves as the catalytic N6-AMP-lysine intermediate. The NAD(+) site is built by Arg-163, Glu-200, Lys-319, and Lys-343. Residues Cys-452, Cys-455, Cys-470, and Cys-476 each coordinate Zn(2+). The BRCT domain occupies 742 to 821 (AAALPLEGKT…AGLQALLAGN (80 aa)).

The protein belongs to the NAD-dependent DNA ligase family. LigA subfamily. Requires Mg(2+) as cofactor. It depends on Mn(2+) as a cofactor.

The enzyme catalyses NAD(+) + (deoxyribonucleotide)n-3'-hydroxyl + 5'-phospho-(deoxyribonucleotide)m = (deoxyribonucleotide)n+m + AMP + beta-nicotinamide D-nucleotide.. Its function is as follows. DNA ligase that catalyzes the formation of phosphodiester linkages between 5'-phosphoryl and 3'-hydroxyl groups in double-stranded DNA using NAD as a coenzyme and as the energy source for the reaction. It is essential for DNA replication and repair of damaged DNA. The protein is DNA ligase of Chromobacterium violaceum (strain ATCC 12472 / DSM 30191 / JCM 1249 / CCUG 213 / NBRC 12614 / NCIMB 9131 / NCTC 9757 / MK).